The primary structure comprises 139 residues: Large-conductance mechanosensitive channel (139 aa).

The next 2 helical transmembrane spans lie at 16–36 (VIDL…VDSL) and 83–103 (GQFI…FVAV).

This sequence belongs to the MscL family. As to quaternary structure, homopentamer.

The protein resides in the cell inner membrane. Channel that opens in response to stretch forces in the membrane lipid bilayer. May participate in the regulation of osmotic pressure changes within the cell. The chain is Large-conductance mechanosensitive channel from Aromatoleum aromaticum (strain DSM 19018 / LMG 30748 / EbN1) (Azoarcus sp. (strain EbN1)).